We begin with the raw amino-acid sequence, 416 residues long: Putative nucleoside permease NupX (416 aa).

Topologically, residues 1-2 (MD) are periplasmic. The chain crosses the membrane as a helical span at residues 3–23 (VMRSVLGMVVLLTIAFLLSVN). At 24–31 (KKKISLRT) the chain is on the cytoplasmic side. The chain crosses the membrane as a helical span at residues 32-52 (VGAALVLQVVIGGIMLWLPPG). At 53–95 (RWVAEKVAFGVHKVMAYSDAGSAFIFGSLVGPKMDTLFDGAGF) the chain is on the periplasmic side. The helical transmembrane segment at 96–118 (IFGFRVLPAIIFVTALVSILYYI) threads the bilayer. Over 119–172 (GVMGILIRILGGIFQKALNISKIESFVAVTTIFLGQNEIPAIVKPFIDRLNRNE) the chain is Cytoplasmic. Residues 173–193 (LFTAICSGMASIAGSTMIGYA) traverse the membrane as a helical segment. Topologically, residues 194–196 (ALG) are periplasmic. Residues 197–217 (VPVEYLLAASLMAIPGGILFA) traverse the membrane as a helical segment. Over 218-246 (RLLSPATESSQVSFNNLSFTETPPKSIIE) the chain is Cytoplasmic. The helical transmembrane segment at 247-267 (AAATGAMTGLKIAAGVATVVM) threads the bilayer. Residues 268 to 352 (AFVAIIALIN…QTAGTLDAKT (85 aa)) lie on the Periplasmic side of the membrane. The chain crosses the membrane as a helical span at residues 353-373 (VAIISFALCGFANFGSIGVVV). Residues 374–394 (GAFSAVAPHRAPEIAQLGLRA) lie on the Cytoplasmic side of the membrane. The chain crosses the membrane as a helical span at residues 395–415 (LAAATLSNLMSATIAGFFIGL). Residue alanine 416 is a topological domain, periplasmic.

This sequence belongs to the concentrative nucleoside transporter (CNT) (TC 2.A.41) family.

It localises to the cell inner membrane. The sequence is that of Putative nucleoside permease NupX (nupX) from Escherichia coli (strain K12).